We begin with the raw amino-acid sequence, 449 residues long: MDKLFGTDGVRGKANEHPMTAEMALRIGAAVGKYFRRDGSAAHRVVIGKDTRLSGYMFENALTAGLTSTGMNVLLLGPVPTPAVGLLTRSMRADLGVMISASHNPACDNGIKFFGPDGFKLSDQAEEEIEALIASGVDAVEANDIGRAKRIDDGRFRYIERLKTSFPRQRRLDGLKVVIDCANGAAHRVAPEALWELGATVIPVGVSPNGKNINEGCGSTHPQFAADTVVAHGADVGICLDGDADRVILIDETGKVGDGDQFMALMAQRWAERGKLANNALVATVMSNLGLEHFLSDLGLKLERTAVGDRYVVERMRAGGFNLGGEQSGHIVMTDYATTGDGLMAGLQFLAAMTQSEQPASVLLNRFEPVPQLLRNVRFAAGQTPLEDARVKAAIAAAEADLSGKGRLLIRKSGTEPLVRVMAEHEDQTVMEQAVDSVVEAVADAVGGT.

Serine 102 (phosphoserine intermediate) is an active-site residue. Mg(2+) contacts are provided by serine 102, aspartate 241, aspartate 243, and aspartate 245. Phosphoserine is present on serine 102.

This sequence belongs to the phosphohexose mutase family. Mg(2+) serves as cofactor. In terms of processing, activated by phosphorylation.

The enzyme catalyses alpha-D-glucosamine 1-phosphate = D-glucosamine 6-phosphate. In terms of biological role, catalyzes the conversion of glucosamine-6-phosphate to glucosamine-1-phosphate. This is Phosphoglucosamine mutase from Roseobacter denitrificans (strain ATCC 33942 / OCh 114) (Erythrobacter sp. (strain OCh 114)).